The sequence spans 382 residues: Lycopene beta-cyclase (382 aa).

NAD(+) is bound at residue 6–36 (DLILVGAGLANGLIALRLQQQQPDMRILLID).

It belongs to the lycopene cyclase family. The cofactor is FAD.

Its subcellular location is the cell inner membrane. The enzyme catalyses a carotenoid psi-end group = a carotenoid beta-end derivative. It carries out the reaction all-trans-lycopene = gamma-carotene. It catalyses the reaction gamma-carotene = all-trans-beta-carotene. The catalysed reaction is all-trans-neurosporene = beta-zeacarotene. The enzyme catalyses beta-zeacarotene = 7,8-dihydro-beta-carotene. The protein operates within carotenoid biosynthesis; beta-carotene biosynthesis. With respect to regulation, activity is increased in the presence of NAD(P)H. NADPH is not involved directly in the cyclization reaction, but must play an indirect role, e.g. as an allosteric activator. In terms of biological role, catalyzes the double cyclization reaction which converts lycopene to beta-carotene. Also catalyzes the double cyclization reaction which converts neurosporene to 7,8-dihydro-beta-carotene via monocyclic beta-zeacarotene. May also convert zeta-carotene to bicyclic 7,8,7',8'-tetrahydro-beta-carotene. The protein is Lycopene beta-cyclase of Pantoea ananas (Erwinia uredovora).